Here is a 286-residue protein sequence, read N- to C-terminus: UDP-3-O-acyl-N-acetylglucosamine deacetylase (286 aa).

Residues His79, His237, and Asp241 each coordinate Zn(2+). The active-site Proton donor is the His264.

The protein belongs to the LpxC family. The cofactor is Zn(2+).

The enzyme catalyses a UDP-3-O-[(3R)-3-hydroxyacyl]-N-acetyl-alpha-D-glucosamine + H2O = a UDP-3-O-[(3R)-3-hydroxyacyl]-alpha-D-glucosamine + acetate. It participates in glycolipid biosynthesis; lipid IV(A) biosynthesis; lipid IV(A) from (3R)-3-hydroxytetradecanoyl-[acyl-carrier-protein] and UDP-N-acetyl-alpha-D-glucosamine: step 2/6. Functionally, catalyzes the hydrolysis of UDP-3-O-myristoyl-N-acetylglucosamine to form UDP-3-O-myristoylglucosamine and acetate, the committed step in lipid A biosynthesis. The protein is UDP-3-O-acyl-N-acetylglucosamine deacetylase of Chlamydia muridarum (strain MoPn / Nigg).